The chain runs to 146 residues: Hut operon positive regulatory protein (146 aa).

This sequence belongs to the HutP family. Homohexamer.

Antiterminator that binds to cis-acting regulatory sequences on the mRNA in the presence of histidine, thereby suppressing transcription termination and activating the hut operon for histidine utilization. The polypeptide is Hut operon positive regulatory protein (Bacillus cytotoxicus (strain DSM 22905 / CIP 110041 / 391-98 / NVH 391-98)).